The sequence spans 156 residues: Small ribosomal subunit protein uS7 (156 aa).

The protein belongs to the universal ribosomal protein uS7 family. In terms of assembly, part of the 30S ribosomal subunit. Contacts proteins S9 and S11.

One of the primary rRNA binding proteins, it binds directly to 16S rRNA where it nucleates assembly of the head domain of the 30S subunit. Is located at the subunit interface close to the decoding center, probably blocks exit of the E-site tRNA. This chain is Small ribosomal subunit protein uS7, found in Shewanella frigidimarina (strain NCIMB 400).